The primary structure comprises 517 residues: Cytochrome P450 monooxygenase 124 (517 aa).

A helical membrane pass occupies residues 3–23 (SLLVLFVSLLALGALKKHLDF). Cysteine 453 lines the heme pocket.

This sequence belongs to the cytochrome P450 family. Heme is required as a cofactor.

Its subcellular location is the membrane. The protein operates within secondary metabolite biosynthesis. Its function is as follows. Cytochrome P450 monooxygenase that is able to use trans-stilbene as a substrate for oxidation. The protein is Cytochrome P450 monooxygenase 124 of Postia placenta (strain ATCC 44394 / Madison 698-R) (Brown rot fungus).